A 347-amino-acid chain; its full sequence is Heat-inducible transcription repressor HrcA (347 aa).

The protein belongs to the HrcA family.

Functionally, negative regulator of class I heat shock genes (grpE-dnaK-dnaJ and groELS operons). Prevents heat-shock induction of these operons. The sequence is that of Heat-inducible transcription repressor HrcA from Mycobacterium sp. (strain JLS).